A 219-amino-acid chain; its full sequence is Response regulator ArlR (219 aa).

Positions 3 to 116 constitute a Response regulatory domain; that stretch reads NILIVEDEQN…ELLARIRAVL (114 aa). Asp-52 bears the 4-aspartylphosphate mark. Residues 122-219 constitute a DNA-binding region (ompR/PhoB-type); the sequence is KDVLDINGII…TVRGVGYVIR (98 aa).

In terms of processing, phosphorylated by ArlS.

It localises to the cytoplasm. In terms of biological role, member of the two-component regulatory system ArlS/ArlR. In Staphylococcus epidermidis (strain ATCC 35984 / DSM 28319 / BCRC 17069 / CCUG 31568 / BM 3577 / RP62A), this protein is Response regulator ArlR (arlR).